Here is a 406-residue protein sequence, read N- to C-terminus: Membrane protein UL43 homolog (406 aa).

A run of 10 helical transmembrane segments spans residues L48–V68, A71–V91, C103–S123, L126–V146, I162–Y182, Y188–A208, S266–I286, L299–Y319, I339–A359, and V386–S406.

The protein belongs to the alphaherpesvirinae HHV-1 UL43 family.

Its subcellular location is the membrane. The protein is Membrane protein UL43 homolog of Varicella-zoster virus (strain Dumas) (HHV-3).